The primary structure comprises 353 residues: S-adenosylmethionine:tRNA ribosyltransferase-isomerase (353 aa).

It belongs to the QueA family. As to quaternary structure, monomer.

Its subcellular location is the cytoplasm. The enzyme catalyses 7-aminomethyl-7-carbaguanosine(34) in tRNA + S-adenosyl-L-methionine = epoxyqueuosine(34) in tRNA + adenine + L-methionine + 2 H(+). It participates in tRNA modification; tRNA-queuosine biosynthesis. Functionally, transfers and isomerizes the ribose moiety from AdoMet to the 7-aminomethyl group of 7-deazaguanine (preQ1-tRNA) to give epoxyqueuosine (oQ-tRNA). The sequence is that of S-adenosylmethionine:tRNA ribosyltransferase-isomerase from Rickettsia bellii (strain RML369-C).